Consider the following 367-residue polypeptide: MAHNTTRVAILFGGRSAEHDVSRASAANIFRSLDASRYAVTLIGITPEGRWVLADAVNARTAQALTVPPDGPQIVLLPAGQGRALVLGDGAAAPRELTFDVIFPVLHGPNGEDGTMQGALELADVAYVGARVMGSAAAMDKDVAKRLLRDAGLPIVPFVTMTAAAPVSYEDAVHAVGCSELFIKPANLGSSVGISKARTPQEFAAACDLALRFDGKILIERCISPVREIECAVLEHADGEVKASELGEIVPASSHGFYSYAAKYTDASGASLHVPAQVEPGLAQRIRKMATEVFGVLCCESLARVDFFVHGEEVYVNEVNTLPGFTNISMYPKMWEATGLPQPALMDALIAHALARHARLRQLASQR.

The ATP-grasp domain maps to 145 to 351; sequence KRLLRDAGLP…QPALMDALIA (207 aa). 174–229 is an ATP binding site; the sequence is HAVGCSELFIKPANLGSSVGISKARTPQEFAAACDLALRFDGKILIERCISPVREI. The Mg(2+) site is built by Asp-306, Glu-318, and Asn-320.

Belongs to the D-alanine--D-alanine ligase family. It depends on Mg(2+) as a cofactor. Mn(2+) serves as cofactor.

It localises to the cytoplasm. It catalyses the reaction 2 D-alanine + ATP = D-alanyl-D-alanine + ADP + phosphate + H(+). It functions in the pathway cell wall biogenesis; peptidoglycan biosynthesis. Its function is as follows. Cell wall formation. This is D-alanine--D-alanine ligase from Bradyrhizobium sp. (strain BTAi1 / ATCC BAA-1182).